Here is a 450-residue protein sequence, read N- to C-terminus: Phosphoglucosamine mutase (450 aa).

Ser102 serves as the catalytic Phosphoserine intermediate. Residues Ser102, Asp244, Asp246, and Asp248 each coordinate Mg(2+). Ser102 carries the phosphoserine modification.

It belongs to the phosphohexose mutase family. Mg(2+) is required as a cofactor. Activated by phosphorylation.

It carries out the reaction alpha-D-glucosamine 1-phosphate = D-glucosamine 6-phosphate. Catalyzes the conversion of glucosamine-6-phosphate to glucosamine-1-phosphate. This Solidesulfovibrio magneticus (strain ATCC 700980 / DSM 13731 / RS-1) (Desulfovibrio magneticus) protein is Phosphoglucosamine mutase.